The chain runs to 203 residues: Transcriptional regulator GfcR (203 aa).

The protein belongs to the purine/pyrimidine phosphoribosyltransferase family. GfcR subfamily.

The protein is Transcriptional regulator GfcR of Methanococcoides burtonii (strain DSM 6242 / NBRC 107633 / OCM 468 / ACE-M).